The primary structure comprises 445 residues: GTPase Der (445 aa).

EngA-type G domains follow at residues 3-167 and 180-353; these read PVIA…YAGQ and IKIA…AAAM. Residues 9 to 16, 56 to 60, 119 to 122, 186 to 193, 233 to 237, and 298 to 301 each bind GTP; these read GRPNVGKS, DTGGF, NKAE, DTAGL, and NKWD. In terms of domain architecture, KH-like spans 354 to 438; sequence AKLPTPKLTR…PLRIEFRSSN (85 aa).

Belongs to the TRAFAC class TrmE-Era-EngA-EngB-Septin-like GTPase superfamily. EngA (Der) GTPase family. Associates with the 50S ribosomal subunit.

Its function is as follows. GTPase that plays an essential role in the late steps of ribosome biogenesis. The chain is GTPase Der from Burkholderia lata (strain ATCC 17760 / DSM 23089 / LMG 22485 / NCIMB 9086 / R18194 / 383).